Consider the following 166-residue polypeptide: Transmembrane protein 278 (166 aa).

The span at 1 to 15 shows a compositional bias: acidic residues; it reads MSDQERETEEDEGGD. Positions 1-28 are disordered; the sequence is MSDQERETEEDEGGDPSDTAPMLPQRLP. Transmembrane regions (helical) follow at residues 39 to 59, 65 to 85, and 111 to 131; these read GWAS…WALA, LLLP…VVYL, and AAVI…ASAA.

Belongs to the TMEM88 family.

It is found in the membrane. The protein is Transmembrane protein 278 (TMEM278) of Bos taurus (Bovine).